Reading from the N-terminus, the 487-residue chain is Betaine aldehyde dehydrogenase (487 aa).

2 residues coordinate K(+): I27 and D93. 149 to 151 lines the NAD(+) pocket; it reads GAW. Catalysis depends on K161, which acts as the Charge relay system. NAD(+) contacts are provided by residues 175–178 and 228–231; these read KPSE and SVPT. L243 is a binding site for K(+). Residue E249 is the Proton acceptor of the active site. Positions 251, 283, and 384 each coordinate NAD(+). Catalysis depends on C283, which acts as the Nucleophile. C283 carries the post-translational modification Cysteine sulfenic acid (-SOH). K(+)-binding residues include K454 and G457. E461 functions as the Charge relay system in the catalytic mechanism.

This sequence belongs to the aldehyde dehydrogenase family. As to quaternary structure, dimer of dimers. K(+) serves as cofactor.

The enzyme catalyses betaine aldehyde + NAD(+) + H2O = glycine betaine + NADH + 2 H(+). It functions in the pathway amine and polyamine biosynthesis; betaine biosynthesis via choline pathway; betaine from betaine aldehyde: step 1/1. Functionally, involved in the biosynthesis of the osmoprotectant glycine betaine. Catalyzes the irreversible oxidation of betaine aldehyde to the corresponding acid. This chain is Betaine aldehyde dehydrogenase, found in Brucella canis (strain ATCC 23365 / NCTC 10854 / RM-666).